The following is a 26-amino-acid chain: Alpha-amylase inhibitor 1 (26 aa).

Belongs to the protease inhibitor I6 (cereal trypsin/alpha-amylase inhibitor) family.

Its subcellular location is the secreted. Its function is as follows. Alpha-amylase inhibitor. The sequence is that of Alpha-amylase inhibitor 1 from Saussurea costus (Costus).